The chain runs to 656 residues: Translation factor GUF1 homolog, mitochondrial (656 aa).

Residues 1-29 (MLAVRRRGLRVLAVAPLRVRGLATTSTEF) constitute a mitochondrion transit peptide. One can recognise a tr-type G domain in the interval 54–238 (ERIRNFSIVA…AVVERLPPPV (185 aa)). GTP is bound by residues 63-70 (AHIDHGKS), 131-135 (DTPGH), and 185-188 (TKID).

The protein belongs to the TRAFAC class translation factor GTPase superfamily. Classic translation factor GTPase family. LepA subfamily.

It localises to the mitochondrion inner membrane. It catalyses the reaction GTP + H2O = GDP + phosphate + H(+). Its function is as follows. Promotes mitochondrial protein synthesis. May act as a fidelity factor of the translation reaction, by catalyzing a one-codon backward translocation of tRNAs on improperly translocated ribosomes. Binds to mitochondrial ribosomes in a GTP-dependent manner. The sequence is that of Translation factor GUF1 homolog, mitochondrial from Phytophthora infestans (strain T30-4) (Potato late blight agent).